Consider the following 80-residue polypeptide: Large ribosomal subunit protein bL31B (80 aa).

Belongs to the bacterial ribosomal protein bL31 family. Type B subfamily. In terms of assembly, part of the 50S ribosomal subunit.

The chain is Large ribosomal subunit protein bL31B from Stenotrophomonas maltophilia (strain K279a).